The following is a 136-amino-acid chain: Serine--glyoxylate aminotransferase (136 aa).

Belongs to the class-V pyridoxal-phosphate-dependent aminotransferase family. Homodimer. The cofactor is pyridoxal 5'-phosphate. In terms of tissue distribution, expressed in leaves but not in root tissue or seedlings.

It is found in the peroxisome. The catalysed reaction is glyoxylate + L-serine = 3-hydroxypyruvate + glycine. The enzyme catalyses glyoxylate + L-alanine = glycine + pyruvate. Its activity is regulated as follows. Inhibited by aminooxyacetate. The chain is Serine--glyoxylate aminotransferase from Zea mays (Maize).